The primary structure comprises 96 residues: Small ribosomal subunit protein bS6 (96 aa).

It belongs to the bacterial ribosomal protein bS6 family.

Its function is as follows. Binds together with bS18 to 16S ribosomal RNA. This Mycobacterium bovis (strain ATCC BAA-935 / AF2122/97) protein is Small ribosomal subunit protein bS6 (rpsF).